A 212-amino-acid polypeptide reads, in one-letter code: COP9 signalosome complex subunit 8 (212 aa).

The PCI domain occupies 26 to 193 (TSLSAYEEQA…KPVVTAPPKD (168 aa)).

The protein belongs to the CSN8 family. Component of the COP9 signalosome (CSN) complex.

The protein resides in the cytoplasm. The protein localises to the nucleus. Component of the COP9 signalosome (CSN) complex that acts as an regulator of the ubiquitin (Ubl) conjugation pathway by mediating the deneddylation of the cullin subunit of SCF-type E3 ubiquitin-protein ligase complexes. The CSN complex seems to link protein degradation to sexual development. This chain is COP9 signalosome complex subunit 8 (csnH), found in Emericella nidulans (strain FGSC A4 / ATCC 38163 / CBS 112.46 / NRRL 194 / M139) (Aspergillus nidulans).